The following is a 642-amino-acid chain: Zinc finger protein 14 (642 aa).

A KRAB domain is found at 4–76; that stretch reads VSFEDVAVNF…MVERLCESRK (73 aa). A disordered region spans residues 77–99; that stretch reads GSKCGETTSQMPNVNINKETSTG. The segment covering 81–99 has biased composition (polar residues); the sequence is GETTSQMPNVNINKETSTG. The segment at 103 to 125 adopts a C2H2-type 1 zinc-finger fold; sequence HECSFCGKDFMHHSSLNRHMRSH. Residues 141–163 form a C2H2-type 2; degenerate zinc finger; the sequence is CKRKAVGKTFSYRHCVRKHERTH. The segment at 169-191 adopts a C2H2-type 3 zinc-finger fold; that stretch reads YECKQCGKAFIYYQPFQRHERIH. A C2H2-type 4; atypical zinc finger spans residues 197-217; that stretch reads YECKQCGKTFIYYQSFQKHAH. 15 C2H2-type zinc fingers span residues 223 to 245, 251 to 273, 279 to 301, 307 to 329, 335 to 357, 363 to 385, 391 to 413, 419 to 441, 447 to 469, 475 to 497, 503 to 525, 531 to 553, 559 to 581, 587 to 609, and 615 to 637; these read YECK…ERTH, YKCK…KRTH, YECK…VITH, YKCK…ERTH, YECK…ETTH, YECK…ERSH, YECK…EKIH, FECK…ERTH, YQCK…ERTH, and YRCK…ERSH.

It belongs to the krueppel C2H2-type zinc-finger protein family.

It localises to the nucleus. Functionally, may be involved in transcriptional regulation. The protein is Zinc finger protein 14 (ZNF14) of Macaca fascicularis (Crab-eating macaque).